Reading from the N-terminus, the 185-residue chain is Peptidyl-tRNA hydrolase (185 aa).

Tyr-14 is a binding site for tRNA. Residue His-19 is the Proton acceptor of the active site. Positions 65, 67, and 113 each coordinate tRNA.

It belongs to the PTH family. Monomer.

It localises to the cytoplasm. It carries out the reaction an N-acyl-L-alpha-aminoacyl-tRNA + H2O = an N-acyl-L-amino acid + a tRNA + H(+). Its function is as follows. Hydrolyzes ribosome-free peptidyl-tRNAs (with 1 or more amino acids incorporated), which drop off the ribosome during protein synthesis, or as a result of ribosome stalling. In terms of biological role, catalyzes the release of premature peptidyl moieties from peptidyl-tRNA molecules trapped in stalled 50S ribosomal subunits, and thus maintains levels of free tRNAs and 50S ribosomes. This Rickettsia rickettsii (strain Iowa) protein is Peptidyl-tRNA hydrolase.